The chain runs to 267 residues: Protein I267L (267 aa).

Belongs to the asfivirus I267L family.

The protein is Protein I267L of African swine fever virus (isolate Tick/Malawi/Lil 20-1/1983) (ASFV).